A 156-amino-acid chain; its full sequence is 6,7-dimethyl-8-ribityllumazine synthase (156 aa).

5-amino-6-(D-ribitylamino)uracil-binding positions include phenylalanine 22, 56–58 (ALE), and 80–82 (AVI). 85-86 (DT) contributes to the (2S)-2-hydroxy-3-oxobutyl phosphate binding site. Histidine 88 functions as the Proton donor in the catalytic mechanism. Residue phenylalanine 113 participates in 5-amino-6-(D-ribitylamino)uracil binding. Arginine 127 contacts (2S)-2-hydroxy-3-oxobutyl phosphate.

The protein belongs to the DMRL synthase family.

The enzyme catalyses (2S)-2-hydroxy-3-oxobutyl phosphate + 5-amino-6-(D-ribitylamino)uracil = 6,7-dimethyl-8-(1-D-ribityl)lumazine + phosphate + 2 H2O + H(+). Its pathway is cofactor biosynthesis; riboflavin biosynthesis; riboflavin from 2-hydroxy-3-oxobutyl phosphate and 5-amino-6-(D-ribitylamino)uracil: step 1/2. Its function is as follows. Catalyzes the formation of 6,7-dimethyl-8-ribityllumazine by condensation of 5-amino-6-(D-ribitylamino)uracil with 3,4-dihydroxy-2-butanone 4-phosphate. This is the penultimate step in the biosynthesis of riboflavin. In Leuconostoc mesenteroides subsp. mesenteroides (strain ATCC 8293 / DSM 20343 / BCRC 11652 / CCM 1803 / JCM 6124 / NCDO 523 / NBRC 100496 / NCIMB 8023 / NCTC 12954 / NRRL B-1118 / 37Y), this protein is 6,7-dimethyl-8-ribityllumazine synthase.